The chain runs to 804 residues: Tubulin polyglutamylase TTLL13 (804 aa).

Positions 1 to 41 (MEPNNCKTSESEEDDIEEEESEEECVREESTTPNSTQQALR) are disordered. Positions 4 to 30 (NNCKTSESEEDDIEEEESEEECVREES) form a coiled coil. The span at 11–26 (SEEDDIEEEESEEECV) shows a compositional bias: acidic residues. The TTL domain occupies 85–430 (RRPLAINLTN…RGCDKKKVIE (346 aa)). Residues Lys202, 208 to 209 (QG), 230 to 233 (QQYI), and 243 to 245 (KFD) contribute to the ATP site. An a protein-binding site is contributed by Gln208. L-glutamate is bound at residue Arg269. 291–292 (TN) is a binding site for ATP. Tyr293 and Lys311 together coordinate L-glutamate. Positions 376, 389, and 391 each coordinate Mg(2+). Residue His392 participates in a protein binding. A c-MTBD region region spans residues 401–482 (RLDREVKDAL…LGGYRRIYPG (82 aa)). Lys407 provides a ligand contact to L-glutamate. Coiled coils occupy residues 504 to 541 (ASKAREECARQQLEEIRLKQEQQENPGTKKRKENKEQN) and 585 to 609 (QDIVEEEELERMKLLLQRENLIRSL). The tract at residues 519–556 (IRLKQEQQENPGTKKRKENKEQNQGESAGEKSRSRTAT) is disordered. Basic and acidic residues predominate over residues 536–551 (ENKEQNQGESAGEKSR).

The protein belongs to the tubulin--tyrosine ligase family. Mg(2+) serves as cofactor. In terms of tissue distribution, highly expressed in heart and testis. Expressed in brain, kidney, liver, lung, muscle and trachea. In the brain, expressed in ependymal cilia, cortex, corpus callosum and striatum.

The catalysed reaction is (L-glutamyl)(n)-gamma-L-glutamyl-L-glutamyl-[protein] + L-glutamate + ATP = (L-glutamyl)(n+1)-gamma-L-glutamyl-L-glutamyl-[protein] + ADP + phosphate + H(+). Its function is as follows. Polyglutamylase which modifies tubulin, generating polyglutamate side chains of variable lengths on the gamma-carboxyl group of specific glutamate residues within the C-terminal tail of tubulin. Mediates ATP-dependent polyglutamate side-chain elongation of the polyglutamylation reaction but not the initiation step. Preferentially modifies the alpha-tubulin tail over a beta-tail. The sequence is that of Tubulin polyglutamylase TTLL13 from Mus musculus (Mouse).